A 139-amino-acid polypeptide reads, in one-letter code: uncharacterized protein (139 aa).

The signal sequence occupies residues 1–32; the sequence is MEFHDDKKNELQKKEEIITEAIDTLFQSSAFG. The sHSP domain occupies 44–139; the sequence is SSLKDVQTTI…TLFFPKNKHE (96 aa).

It belongs to the small heat shock protein (HSP20) family.

This is an uncharacterized protein from Bacillus subtilis (strain 168).